An 80-amino-acid chain; its full sequence is UPF0291 protein llmg_1475 (80 aa).

This sequence belongs to the UPF0291 family.

The protein resides in the cytoplasm. The chain is UPF0291 protein llmg_1475 from Lactococcus lactis subsp. cremoris (strain MG1363).